Reading from the N-terminus, the 363-residue chain is NADH-quinone oxidoreductase subunit H (363 aa).

10 consecutive transmembrane segments (helical) span residues 29 to 49 (VLKILLIAVPVIVTVAFYVVW), 62 to 82 (GPMYVGMGIFQAFADVFKLLF), 96 to 116 (FIIAPLLTLAPAFAAWSVVPF), 127 to 147 (VGLLYLLAMTSLGVYGIILAG), 163 to 183 (AAQVVSYEIAMGFALVGVMIA), 202 to 222 (FFDWFLIPLFPLFIVYWVSGV), 239 to 257 (IVAGHMVEYSGGAFALFFL), 264 to 286 (ILVSFLISIFFLGGWLSPIQGWV), 299 to 319 (TGGWPWLLMKVFFFASAYIWF), and 339 to 359 (FIPLTIVWIAVTALMVFYGVI).

The protein belongs to the complex I subunit 1 family. NDH-1 is composed of 14 different subunits. Subunits NuoA, H, J, K, L, M, N constitute the membrane sector of the complex.

It is found in the cell inner membrane. It carries out the reaction a quinone + NADH + 5 H(+)(in) = a quinol + NAD(+) + 4 H(+)(out). NDH-1 shuttles electrons from NADH, via FMN and iron-sulfur (Fe-S) centers, to quinones in the respiratory chain. The immediate electron acceptor for the enzyme in this species is believed to be ubiquinone. Couples the redox reaction to proton translocation (for every two electrons transferred, four hydrogen ions are translocated across the cytoplasmic membrane), and thus conserves the redox energy in a proton gradient. This subunit may bind ubiquinone. The protein is NADH-quinone oxidoreductase subunit H of Xanthomonas campestris pv. campestris (strain 8004).